The following is a 270-amino-acid chain: Cell division protein DivIB (270 aa).

At Met-1–Arg-38 the chain is on the cytoplasmic side. Residues Leu-39 to Asp-59 traverse the membrane as a helical segment. Topologically, residues Lys-60–Ser-270 are extracellular. Residues Ser-64–Ala-135 form the POTRA domain.

Belongs to the FtsQ/DivIB family. DivIB subfamily.

The protein resides in the cell membrane. Its function is as follows. Cell division protein that may be involved in stabilizing or promoting the assembly of the division complex. The sequence is that of Cell division protein DivIB from Erysipelothrix rhusiopathiae (strain Fujisawa).